The sequence spans 975 residues: Kinesin heavy chain (975 aa).

One can recognise a Kinesin motor domain in the interval 12–333 (SIKVVCRFRP…LDFGRRAKTV (322 aa)). Residue 92 to 99 (GQTSSGKT) coordinates ATP. Residues 180 to 321 (VSSPEDVFEV…PASFNESETK (142 aa)) are microtubule-binding. A coiled-coil region spans residues 335-931 (NVVCVNEELT…DRIKEAVRQK (597 aa)). The interval 810-891 (VAKELQTLHN…LPKLEKRLRC (82 aa)) is necessary for associating with milt. A globular region spans residues 932 to 975 (HLGRRGPQAQIAKPIRSGQGAIAIRGGGAVGGPSPLAQVNPVNS).

Belongs to the TRAFAC class myosin-kinesin ATPase superfamily. Kinesin family. Kinesin subfamily. As to quaternary structure, oligomer composed of two heavy chains and two light chains.

It localises to the cytoplasm. The protein resides in the cytoskeleton. Its function is as follows. Kinesin is a microtubule-associated force-producing protein that may play a role in organelle transport. Milt and Miro form an essential protein complex that links Khc to mitochondria for light chain-independent, anterograde transport of mitochondria. The chain is Kinesin heavy chain (Khc) from Drosophila melanogaster (Fruit fly).